We begin with the raw amino-acid sequence, 447 residues long: uncharacterized protein (447 aa).

This is an uncharacterized protein from Mus musculus (Mouse).